The primary structure comprises 721 residues: Catalase-peroxidase 1 (721 aa).

Residues 98–226 constitute a cross-link (tryptophyl-tyrosyl-methioninium (Trp-Tyr) (with M-252)); that stretch reads WHAAGTYRIA…LAAVMMGLIY (129 aa). His99 (proton acceptor) is an active-site residue. Positions 226-252 form a cross-link, tryptophyl-tyrosyl-methioninium (Tyr-Met) (with W-98); the sequence is YVNPEGVDGQPDPLKTAHDVRVTFARM. A heme b-binding site is contributed by His267.

The protein belongs to the peroxidase family. Peroxidase/catalase subfamily. Homodimer or homotetramer. Heme b serves as cofactor. Post-translationally, formation of the three residue Trp-Tyr-Met cross-link is important for the catalase, but not the peroxidase activity of the enzyme.

The enzyme catalyses H2O2 + AH2 = A + 2 H2O. The catalysed reaction is 2 H2O2 = O2 + 2 H2O. Functionally, bifunctional enzyme with both catalase and broad-spectrum peroxidase activity. This Vibrio parahaemolyticus serotype O3:K6 (strain RIMD 2210633) protein is Catalase-peroxidase 1.